The following is a 114-amino-acid chain: Large ribosomal subunit protein eL30 (114 aa).

This sequence belongs to the eukaryotic ribosomal protein eL30 family.

The sequence is that of Large ribosomal subunit protein eL30 (RPL30) from Branchiostoma belcheri (Amphioxus).